Reading from the N-terminus, the 801-residue chain is U-box domain-containing protein 44 (801 aa).

Residues 22–101 (HIYEAFICPL…EEWRSRNDAA (80 aa)) form the U-box domain. ARM repeat units follow at residues 134-173 (RSNR…VVVE), 176-215 (DESK…ELSK), 218-259 (ALCE…NMER), 261-300 (EEIV…ELPL), 301-340 (NNDV…KISS), 342-386 (EGSA…NIVN), 390-429 (DFDK…GLTS), 435-475 (PKVV…NLSP), and 480-521 (ELAK…ELPD).

Interacts with AAO3. Binds to SD129. As to expression, expressed in leaves, root vasculature and guard cells.

The enzyme catalyses S-ubiquitinyl-[E2 ubiquitin-conjugating enzyme]-L-cysteine + [acceptor protein]-L-lysine = [E2 ubiquitin-conjugating enzyme]-L-cysteine + N(6)-ubiquitinyl-[acceptor protein]-L-lysine.. It participates in protein modification; protein ubiquitination. Its function is as follows. Functions as an E3 ubiquitin-protein ligase. Prevents premature senescence probably by targeting proteins involved in this process for degradation. Promotes the degradation of AAO3 and thus represses abscisic acid (ABA) biosynthesis. The sequence is that of U-box domain-containing protein 44 (PUB44) from Arabidopsis thaliana (Mouse-ear cress).